The chain runs to 453 residues: UDP-N-acetylmuramate--L-alanine ligase (453 aa).

112–118 serves as a coordination point for ATP; the sequence is GTHGKTT.

This sequence belongs to the MurCDEF family.

It localises to the cytoplasm. It carries out the reaction UDP-N-acetyl-alpha-D-muramate + L-alanine + ATP = UDP-N-acetyl-alpha-D-muramoyl-L-alanine + ADP + phosphate + H(+). It participates in cell wall biogenesis; peptidoglycan biosynthesis. Cell wall formation. This chain is UDP-N-acetylmuramate--L-alanine ligase, found in Lawsonia intracellularis (strain PHE/MN1-00).